The following is a 158-amino-acid chain: Transcription elongation factor GreA (158 aa).

The protein belongs to the GreA/GreB family.

Functionally, necessary for efficient RNA polymerase transcription elongation past template-encoded arresting sites. The arresting sites in DNA have the property of trapping a certain fraction of elongating RNA polymerases that pass through, resulting in locked ternary complexes. Cleavage of the nascent transcript by cleavage factors such as GreA or GreB allows the resumption of elongation from the new 3'terminus. GreA releases sequences of 2 to 3 nucleotides. This chain is Transcription elongation factor GreA, found in Methylobacterium nodulans (strain LMG 21967 / CNCM I-2342 / ORS 2060).